Here is a 399-residue protein sequence, read N- to C-terminus: S-adenosylmethionine synthase (399 aa).

Position 135 to 140 (135 to 140 (GEGSTD)) interacts with ATP.

It belongs to the AdoMet synthase 2 family. It depends on Mg(2+) as a cofactor.

The catalysed reaction is L-methionine + ATP + H2O = S-adenosyl-L-methionine + phosphate + diphosphate. Its pathway is amino-acid biosynthesis; S-adenosyl-L-methionine biosynthesis; S-adenosyl-L-methionine from L-methionine: step 1/1. In terms of biological role, catalyzes the formation of S-adenosylmethionine from methionine and ATP. The chain is S-adenosylmethionine synthase (mat) from Archaeoglobus fulgidus (strain ATCC 49558 / DSM 4304 / JCM 9628 / NBRC 100126 / VC-16).